We begin with the raw amino-acid sequence, 191 residues long: Acireductone dioxygenase 2 (191 aa).

4 residues coordinate Fe(2+): histidine 102, histidine 104, glutamate 108, and histidine 146. Residues histidine 102, histidine 104, glutamate 108, and histidine 146 each coordinate Ni(2+).

Belongs to the acireductone dioxygenase (ARD) family. Monomer. Fe(2+) serves as cofactor. The cofactor is Ni(2+).

The catalysed reaction is 1,2-dihydroxy-5-(methylsulfanyl)pent-1-en-3-one + O2 = 3-(methylsulfanyl)propanoate + CO + formate + 2 H(+). It carries out the reaction 1,2-dihydroxy-5-(methylsulfanyl)pent-1-en-3-one + O2 = 4-methylsulfanyl-2-oxobutanoate + formate + 2 H(+). It functions in the pathway amino-acid biosynthesis; L-methionine biosynthesis via salvage pathway; L-methionine from S-methyl-5-thio-alpha-D-ribose 1-phosphate: step 5/6. Its function is as follows. Catalyzes 2 different reactions between oxygen and the acireductone 1,2-dihydroxy-3-keto-5-methylthiopentene (DHK-MTPene) depending upon the metal bound in the active site. Fe-containing acireductone dioxygenase (Fe-ARD) produces formate and 2-keto-4-methylthiobutyrate (KMTB), the alpha-ketoacid precursor of methionine in the methionine recycle pathway. Ni-containing acireductone dioxygenase (Ni-ARD) produces methylthiopropionate, carbon monoxide and formate, and does not lie on the methionine recycle pathway. The sequence is that of Acireductone dioxygenase 2 from Nocardia farcinica (strain IFM 10152).